The sequence spans 393 residues: S-adenosylmethionine synthase (393 aa).

Position 17 (His-17) interacts with ATP. Asp-19 is a Mg(2+) binding site. Residue Glu-45 coordinates K(+). 2 residues coordinate L-methionine: Glu-58 and Gln-106. Residues Gln-106–Ala-116 form a flexible loop region. Residues Asp-171–Lys-173, Lys-237–Phe-238, Asp-246, Arg-252–Lys-253, Ala-269, and Lys-273 each bind ATP. Asp-246 is an L-methionine binding site. Lys-277 serves as a coordination point for L-methionine.

Belongs to the AdoMet synthase family. As to quaternary structure, homotetramer; dimer of dimers. It depends on Mg(2+) as a cofactor. Requires K(+) as cofactor.

It localises to the cytoplasm. It catalyses the reaction L-methionine + ATP + H2O = S-adenosyl-L-methionine + phosphate + diphosphate. It functions in the pathway amino-acid biosynthesis; S-adenosyl-L-methionine biosynthesis; S-adenosyl-L-methionine from L-methionine: step 1/1. Functionally, catalyzes the formation of S-adenosylmethionine (AdoMet) from methionine and ATP. The overall synthetic reaction is composed of two sequential steps, AdoMet formation and the subsequent tripolyphosphate hydrolysis which occurs prior to release of AdoMet from the enzyme. The protein is S-adenosylmethionine synthase of Ruegeria sp. (strain TM1040) (Silicibacter sp.).